Here is a 470-residue protein sequence, read N- to C-terminus: Cysteine--tRNA ligase (470 aa).

Zn(2+) is bound at residue C28. The 'HIGH' region motif lies at 30-40 (PTVYNYIHIGN). Residues C212, H237, and E241 each contribute to the Zn(2+) site. Residues 271 to 275 (KMSKS) carry the 'KMSKS' region motif. K274 is an ATP binding site.

The protein belongs to the class-I aminoacyl-tRNA synthetase family. Monomer. The cofactor is Zn(2+).

The protein localises to the cytoplasm. It carries out the reaction tRNA(Cys) + L-cysteine + ATP = L-cysteinyl-tRNA(Cys) + AMP + diphosphate. The protein is Cysteine--tRNA ligase of Lactiplantibacillus plantarum (strain ATCC BAA-793 / NCIMB 8826 / WCFS1) (Lactobacillus plantarum).